The primary structure comprises 493 residues: Glutamate--tRNA ligase (493 aa).

The short motif at 10–20 (PSPTGDPHVGT) is the 'HIGH' region element. A 'KMSKS' region motif is present at residues 251-255 (KLSKR). Lys254 is an ATP binding site.

Belongs to the class-I aminoacyl-tRNA synthetase family. Glutamate--tRNA ligase type 1 subfamily. As to quaternary structure, monomer.

It is found in the cytoplasm. The catalysed reaction is tRNA(Glu) + L-glutamate + ATP = L-glutamyl-tRNA(Glu) + AMP + diphosphate. In terms of biological role, catalyzes the attachment of glutamate to tRNA(Glu) in a two-step reaction: glutamate is first activated by ATP to form Glu-AMP and then transferred to the acceptor end of tRNA(Glu). This Pseudomonas putida (strain ATCC 47054 / DSM 6125 / CFBP 8728 / NCIMB 11950 / KT2440) protein is Glutamate--tRNA ligase.